The chain runs to 389 residues: Putative serine/threonine-protein kinase (389 aa).

One can recognise a Protein kinase domain in the interval Y15 to Y356. D164 (proton acceptor) is an active-site residue.

It belongs to the protein kinase superfamily. Ser/Thr protein kinase family.

It carries out the reaction L-seryl-[protein] + ATP = O-phospho-L-seryl-[protein] + ADP + H(+). It catalyses the reaction L-threonyl-[protein] + ATP = O-phospho-L-threonyl-[protein] + ADP + H(+). The sequence is that of Putative serine/threonine-protein kinase from Mycoplasma pneumoniae (strain ATCC 29342 / M129 / Subtype 1) (Mycoplasmoides pneumoniae).